The following is a 379-amino-acid chain: Muconate cycloisomerase 1-1 (379 aa).

Lys-169 is an active-site residue. Mn(2+) is bound by residues Asp-198, Glu-224, and Asp-247.

Belongs to the mandelate racemase/muconate lactonizing enzyme family. As to quaternary structure, homooctamer. The cofactor is Mn(2+).

It carries out the reaction (S)-muconolactone = cis,cis-muconate + H(+). The protein operates within aromatic compound metabolism; beta-ketoadipate pathway; 5-oxo-4,5-dihydro-2-furylacetate from catechol: step 2/3. In terms of biological role, catalyzes a syn cycloisomerization. The sequence is that of Muconate cycloisomerase 1-1 (catB1) from Acinetobacter lwoffii.